A 578-amino-acid chain; its full sequence is Tetratricopeptide repeat protein ttc-39B (578 aa).

TPR repeat units lie at residues A297 to Y330, C481 to I514, and P522 to Y554.

This is Tetratricopeptide repeat protein ttc-39B from Caenorhabditis elegans.